The sequence spans 373 residues: T-protein (373 aa).

One can recognise a Chorismate mutase domain in the interval 1–90 (MVAELTALRD…ESYTSENDKG (90 aa)). The 263-residue stretch at 99 to 361 (RPVVIVGGKG…DHAKRFLVES (263 aa)) folds into the Prephenate/arogenate dehydrogenase domain.

This sequence in the C-terminal section; belongs to the prephenate/arogenate dehydrogenase family.

It localises to the cytoplasm. The enzyme catalyses chorismate = prephenate. It carries out the reaction prephenate + NAD(+) = 3-(4-hydroxyphenyl)pyruvate + CO2 + NADH. It functions in the pathway amino-acid biosynthesis; L-tyrosine biosynthesis; (4-hydroxyphenyl)pyruvate from prephenate (NAD(+) route): step 1/1. Its pathway is metabolic intermediate biosynthesis; prephenate biosynthesis; prephenate from chorismate: step 1/1. The sequence is that of T-protein (tyrA) from Enterobacter agglomerans (Erwinia herbicola).